A 596-amino-acid chain; its full sequence is Cell adhesion molecule CEACAM20 (596 aa).

Residues 1–30 (MGPADSWGHHWMGILLSASLCTVWSPPAAA) form the signal peptide. The Extracellular segment spans residues 31–450 (QLTLNANPLD…SSLSSGAIAG (420 aa)). Ig-like C2-type domains are found at residues 58–154 (PQIH…PIFL), 160–246 (PDPV…GTLK), 256–341 (PQVV…LELT), and 346–432 (PDQV…TSVL). Cysteine 90 and cysteine 138 are oxidised to a cystine. Asparagine 96 and asparagine 105 each carry an N-linked (GlcNAc...) asparagine glycan. Cysteine 276 and cysteine 324 are disulfide-bonded. Residues asparagine 280, asparagine 306, asparagine 317, asparagine 368, and asparagine 415 are each glycosylated (N-linked (GlcNAc...) asparagine). Cysteine 375 and cysteine 416 are oxidised to a cystine. The helical transmembrane segment at 451–471 (IVIGILAVIAVASELGYFLCI) threads the bilayer. Over 472–585 (RNARRPSRKT…SIYEELVNPE (114 aa)) the chain is Cytoplasmic. Disordered stretches follow at residues 477-510 (PSRK…LSPE) and 527-563 (QPPD…LMPP). Residues 501–510 (EPSSESLSPE) show a composition bias toward low complexity. Positions 553-562 (WKPPPKPLMP) are enriched in pro residues. A phosphotyrosine mark is found at tyrosine 578 and tyrosine 589.

The protein belongs to the immunoglobulin superfamily. CEA family. In terms of assembly, interacts (via extracellular domain) with PTPRH (via extracellular domain); the interaction dephosphorylates CEACAM20. Interacts (phosphorylated form) with SYK (via SH2 domains); the interaction further enhances CEACAM20 phosphorylation. In terms of processing, phosphorylated on tyrosine residues by SYK, SRC and FYN in vitro.

Its subcellular location is the cell projection. The protein resides in the microvillus membrane. The protein localises to the apical cell membrane. Together with the tyrosine-protein kinase SYK, enhances production of the cytokine CXCL8/IL-8 via the NFKB pathway and may thus have a role in the intestinal immune response. This is Cell adhesion molecule CEACAM20 from Homo sapiens (Human).